We begin with the raw amino-acid sequence, 342 residues long: Anthranilate phosphoribosyltransferase (342 aa).

Residues glycine 84, 87–88, threonine 92, 94–97, 112–120, and serine 124 each bind 5-phospho-alpha-D-ribose 1-diphosphate; these read GD, NIST, and KHGGRSVSS. Position 84 (glycine 84) interacts with anthranilate. Position 96 (serine 96) interacts with Mg(2+). Arginine 170 lines the anthranilate pocket. 2 residues coordinate Mg(2+): aspartate 229 and glutamate 230.

It belongs to the anthranilate phosphoribosyltransferase family. Homodimer. The cofactor is Mg(2+).

It carries out the reaction N-(5-phospho-beta-D-ribosyl)anthranilate + diphosphate = 5-phospho-alpha-D-ribose 1-diphosphate + anthranilate. The protein operates within amino-acid biosynthesis; L-tryptophan biosynthesis; L-tryptophan from chorismate: step 2/5. In terms of biological role, catalyzes the transfer of the phosphoribosyl group of 5-phosphorylribose-1-pyrophosphate (PRPP) to anthranilate to yield N-(5'-phosphoribosyl)-anthranilate (PRA). This chain is Anthranilate phosphoribosyltransferase, found in Verminephrobacter eiseniae (strain EF01-2).